The sequence spans 35 residues: Photosystem II reaction center protein T (35 aa).

The helical transmembrane segment at 3–23 threads the bilayer; that stretch reads ALVYTFLLVSTLGIIFFAIFF.

It belongs to the PsbT family. In terms of assembly, PSII is composed of 1 copy each of membrane proteins PsbA, PsbB, PsbC, PsbD, PsbE, PsbF, PsbH, PsbI, PsbJ, PsbK, PsbL, PsbM, PsbT, PsbY, PsbZ, Psb30/Ycf12, at least 3 peripheral proteins of the oxygen-evolving complex and a large number of cofactors. It forms dimeric complexes.

Its subcellular location is the plastid. It is found in the chloroplast thylakoid membrane. Found at the monomer-monomer interface of the photosystem II (PS II) dimer, plays a role in assembly and dimerization of PSII. PSII is a light-driven water plastoquinone oxidoreductase, using light energy to abstract electrons from H(2)O, generating a proton gradient subsequently used for ATP formation. The chain is Photosystem II reaction center protein T from Cycas revoluta (Sago palm).